Here is a 463-residue protein sequence, read N- to C-terminus: Glutamate--tRNA ligase 1 (463 aa).

Positions 10–20 (PSPTGYLHIGG) match the 'HIGH' region motif. The 'KMSKS' region motif lies at 238-242 (KLSKR). Residue K241 participates in ATP binding.

It belongs to the class-I aminoacyl-tRNA synthetase family. Glutamate--tRNA ligase type 1 subfamily. Monomer.

The protein resides in the cytoplasm. It carries out the reaction tRNA(Glu) + L-glutamate + ATP = L-glutamyl-tRNA(Glu) + AMP + diphosphate. Its function is as follows. Catalyzes the attachment of glutamate to tRNA(Glu) in a two-step reaction: glutamate is first activated by ATP to form Glu-AMP and then transferred to the acceptor end of tRNA(Glu). This is Glutamate--tRNA ligase 1 from Helicobacter pylori (strain Shi470).